A 709-amino-acid polypeptide reads, in one-letter code: Polyribonucleotide nucleotidyltransferase (709 aa).

Mg(2+)-binding residues include Asp487 and Asp493. Positions 554-613 (PRIHTMKISSDKIKDVIGKGGAVIRALCEETGTTIEIEDDGTIKIAATEGAAAKEAIRRI) constitute a KH domain. The 69-residue stretch at 623 to 691 (GKIYTGKVMR…RQGRIRLSIK (69 aa)) folds into the S1 motif domain.

Belongs to the polyribonucleotide nucleotidyltransferase family. As to quaternary structure, component of the RNA degradosome, which is a multiprotein complex involved in RNA processing and mRNA degradation. Mg(2+) is required as a cofactor.

Its subcellular location is the cytoplasm. It catalyses the reaction RNA(n+1) + phosphate = RNA(n) + a ribonucleoside 5'-diphosphate. Involved in mRNA degradation. Catalyzes the phosphorolysis of single-stranded polyribonucleotides processively in the 3'- to 5'-direction. The polypeptide is Polyribonucleotide nucleotidyltransferase (Aliivibrio fischeri (strain MJ11) (Vibrio fischeri)).